A 371-amino-acid chain; its full sequence is Bifunctional enzyme IspD/IspF (371 aa).

Residues 1 to 212 (MLDISLIMLG…CLIPPSNEHF (212 aa)) form a 2-C-methyl-D-erythritol 4-phosphate cytidylyltransferase region. Residues 212 to 371 (FTGIGFDAHE…ANLKYYDWTK (160 aa)) are 2-C-methyl-D-erythritol 2,4-cyclodiphosphate synthase. Positions 218 and 220 each coordinate a divalent metal cation. Residues 218–220 (DAH) and 244–245 (HS) each bind 4-CDP-2-C-methyl-D-erythritol 2-phosphate. Position 252 (His-252) interacts with a divalent metal cation. 4-CDP-2-C-methyl-D-erythritol 2-phosphate-binding positions include 266–268 (DIG), 271–275 (FPDTD), 342–345 (TTTE), Phe-349, and Arg-352.

The protein in the N-terminal section; belongs to the IspD/TarI cytidylyltransferase family. IspD subfamily. This sequence in the C-terminal section; belongs to the IspF family. Requires a divalent metal cation as cofactor.

It carries out the reaction 2-C-methyl-D-erythritol 4-phosphate + CTP + H(+) = 4-CDP-2-C-methyl-D-erythritol + diphosphate. It catalyses the reaction 4-CDP-2-C-methyl-D-erythritol 2-phosphate = 2-C-methyl-D-erythritol 2,4-cyclic diphosphate + CMP. The protein operates within isoprenoid biosynthesis; isopentenyl diphosphate biosynthesis via DXP pathway; isopentenyl diphosphate from 1-deoxy-D-xylulose 5-phosphate: step 2/6. Its pathway is isoprenoid biosynthesis; isopentenyl diphosphate biosynthesis via DXP pathway; isopentenyl diphosphate from 1-deoxy-D-xylulose 5-phosphate: step 4/6. In terms of biological role, bifunctional enzyme that catalyzes the formation of 4-diphosphocytidyl-2-C-methyl-D-erythritol from CTP and 2-C-methyl-D-erythritol 4-phosphate (MEP) (IspD), and catalyzes the conversion of 4-diphosphocytidyl-2-C-methyl-D-erythritol 2-phosphate (CDP-ME2P) to 2-C-methyl-D-erythritol 2,4-cyclodiphosphate (ME-CPP) with a corresponding release of cytidine 5-monophosphate (CMP) (IspF). In Campylobacter curvus (strain 525.92), this protein is Bifunctional enzyme IspD/IspF.